A 318-amino-acid chain; its full sequence is Protein teg (318 aa).

One can recognise a PNPLA domain in the interval 7 to 182 (ITFDGGGTLG…VATNTSTASI (176 aa)). Positions 11-16 (GGGTLG) match the GXGXXG motif. Positions 42–46 (GNSIG) match the GXSXG motif. Ser-44 acts as the Nucleophile in catalysis. Asp-169 functions as the Proton acceptor in the catalytic mechanism.

In terms of biological role, probable lipid hydrolase. In Priestia megaterium (strain ATCC 14581 / DSM 32 / CCUG 1817 / JCM 2506 / NBRC 15308 / NCIMB 9376 / NCTC 10342 / NRRL B-14308 / VKM B-512 / Ford 19) (Bacillus megaterium), this protein is Protein teg (teg).